A 25-amino-acid chain; its full sequence is Hemocyanin subunit 3 (25 aa).

The protein belongs to the tyrosinase family. Hemocyanin subfamily. In terms of tissue distribution, hemolymph.

It localises to the secreted. The protein resides in the extracellular space. Hemocyanins are copper-containing oxygen carriers occurring freely dissolved in the hemolymph of many mollusks and arthropods. The protein is Hemocyanin subunit 3 of Maja squinado (Mediterranean spider crab).